We begin with the raw amino-acid sequence, 238 residues long: Ribonuclease 3 (238 aa).

Residues 4–130 (IQTLFQTLNI…LFGAIYLDLG (127 aa)) form the RNase III domain. A Mg(2+)-binding site is contributed by Glu-45. Asp-49 is an active-site residue. Residues Asp-116 and Glu-119 each coordinate Mg(2+). Residue Glu-119 is part of the active site. The DRBM domain occupies 154-222 (DFKTQLQEIV…AQQALSKVAK (69 aa)). The segment at 215–238 (QALSKVAKPKDLLNNKGGKEKELQ) is disordered. A compositionally biased stretch (basic and acidic residues) spans 222–238 (KPKDLLNNKGGKEKELQ).

It belongs to the ribonuclease III family. As to quaternary structure, homodimer. The cofactor is Mg(2+).

Its subcellular location is the cytoplasm. It carries out the reaction Endonucleolytic cleavage to 5'-phosphomonoester.. Functionally, digests double-stranded RNA. Involved in the processing of primary rRNA transcript to yield the immediate precursors to the large and small rRNAs (23S and 16S). Processes some mRNAs, and tRNAs when they are encoded in the rRNA operon. Processes pre-crRNA and tracrRNA of type II CRISPR loci if present in the organism. The chain is Ribonuclease 3 from Onion yellows phytoplasma (strain OY-M).